The following is a 332-amino-acid chain: Oxygen-dependent coproporphyrinogen-III oxidase (332 aa).

Position 119 (serine 119) interacts with coproporphyrinogen III. Residue histidine 133 is the Proton donor of the active site. Residues 135–137 (NVR) and 284–285 (GR) contribute to the coproporphyrinogen III site.

It belongs to the aerobic coproporphyrinogen-III oxidase family. In terms of assembly, homodimer.

The enzyme catalyses coproporphyrinogen III + O2 + 2 H(+) = protoporphyrinogen IX + 2 CO2 + 2 H2O. It functions in the pathway porphyrin-containing compound metabolism; protoporphyrin-IX biosynthesis; protoporphyrinogen-IX from coproporphyrinogen-III (O2 route): step 1/1. In terms of biological role, involved in the heme biosynthesis. Catalyzes the aerobic oxidative decarboxylation of propionate groups of rings A and B of coproporphyrinogen-III to yield the vinyl groups in protoporphyrinogen-IX. The protein is Oxygen-dependent coproporphyrinogen-III oxidase (cpox) of Dictyostelium discoideum (Social amoeba).